Consider the following 273-residue polypeptide: Torsin-1A (273 aa).

The segment at 45–205 is interaction with SNAPIN; the sequence is KPKKPLTLSL…VSVFNNKNSG (161 aa). Residue 56–63 coordinates ATP; it reads GWTGTGKN. Residues N97 and N112 are each glycosylated (N-linked (GlcNAc...) asparagine).

The protein belongs to the ClpA/ClpB family. Torsin subfamily. As to quaternary structure, homohexamer. Interacts with TOR1B; the interaction may be specific of neural tissues. Interacts (ATP-bound) with TOR1AIP1 and TOR1AIP2; the interactions induce ATPase activity. Interacts with KLHL14; preferentially when ATP-free. Interacts with KLC1 (via TPR repeats); the interaction associates TOR1A with the kinesin oligomeric complex. Interacts with COPS4; the interaction associates TOR1A with the CSN complex. Interacts with SNAPIN; the interaction is direct and associates SNAPIN with the CSN complex. Interacts with STON2. Interacts (ATP-bound) with SYNE3 (via KASH domain); the interaction is required for SYNE3 nuclear envelope localization. Interacts with VIM; the interaction associates TOR1A with the cytoskeleton. Interacts with PLEC. Interacts (ATP-bound) with SLC6A3; regulates SLC6A3 transport to the plasma membrane. N-glycosylated.

The protein resides in the endoplasmic reticulum lumen. It localises to the nucleus membrane. Its subcellular location is the cell projection. The protein localises to the growth cone. It is found in the cytoplasmic vesicle membrane. The protein resides in the synapse. It localises to the synaptosome. Its subcellular location is the cytoplasm. The protein localises to the cytoskeleton. It catalyses the reaction ATP + H2O = ADP + phosphate + H(+). Protein with chaperone functions important for the control of protein folding, processing, stability and localization as well as for the reduction of misfolded protein aggregates. Involved in the regulation of synaptic vesicle recycling, controls STON2 protein stability in collaboration with the COP9 signalosome complex (CSN). In the nucleus, may link the cytoskeleton with the nuclear envelope, this mechanism seems to be crucial for the control of nuclear polarity, cell movement and, specifically in neurons, nuclear envelope integrity. Participates in the cellular trafficking and may regulate the subcellular location of multipass membrane proteins such as the dopamine transporter SLC6A3, leading to the modulation of dopamine neurotransmission. In the endoplasmic reticulum, plays a role in the quality control of protein folding by increasing clearance of misfolded proteins such as SGCE variants or holding them in an intermediate state for proper refolding. May have a redundant function with TOR1B in non-neural tissues. This Cricetus cricetus (Black-bellied hamster) protein is Torsin-1A (TOR1A).